A 289-amino-acid chain; its full sequence is Acetyl-coenzyme A carboxylase carboxyl transferase subunit beta (289 aa).

The CoA carboxyltransferase N-terminal domain maps to 36-289 (MWLRCPHCHQ…LLKTGSVANE (254 aa)). The Zn(2+) site is built by cysteine 40, cysteine 43, cysteine 58, and cysteine 61. A C4-type zinc finger spans residues 40–61 (CPHCHQLLFAKQLTQYAVCPNC).

The protein belongs to the AccD/PCCB family. In terms of assembly, acetyl-CoA carboxylase is a heterohexamer composed of biotin carboxyl carrier protein (AccB), biotin carboxylase (AccC) and two subunits each of ACCase subunit alpha (AccA) and ACCase subunit beta (AccD). Requires Zn(2+) as cofactor.

It localises to the cytoplasm. It catalyses the reaction N(6)-carboxybiotinyl-L-lysyl-[protein] + acetyl-CoA = N(6)-biotinyl-L-lysyl-[protein] + malonyl-CoA. The protein operates within lipid metabolism; malonyl-CoA biosynthesis; malonyl-CoA from acetyl-CoA: step 1/1. Its function is as follows. Component of the acetyl coenzyme A carboxylase (ACC) complex. Biotin carboxylase (BC) catalyzes the carboxylation of biotin on its carrier protein (BCCP) and then the CO(2) group is transferred by the transcarboxylase to acetyl-CoA to form malonyl-CoA. The sequence is that of Acetyl-coenzyme A carboxylase carboxyl transferase subunit beta from Limosilactobacillus reuteri subsp. reuteri (strain JCM 1112) (Lactobacillus reuteri).